A 274-amino-acid chain; its full sequence is uncharacterized protein (274 aa).

It belongs to the class IV-like SAM-binding methyltransferase superfamily. RNA methyltransferase TrmH family.

This is an uncharacterized protein from Synechocystis sp. (strain ATCC 27184 / PCC 6803 / Kazusa).